We begin with the raw amino-acid sequence, 349 residues long: tRNA pseudouridine synthase D (349 aa).

Residue phenylalanine 27 coordinates substrate. The Nucleophile role is filled by aspartate 80. Asparagine 129 is a binding site for substrate. A TRUD domain is found at 155 to 303; it reads GVPNYFGAQR…VEASRRAMLL (149 aa). Substrate is bound at residue phenylalanine 329.

Belongs to the pseudouridine synthase TruD family.

The catalysed reaction is uridine(13) in tRNA = pseudouridine(13) in tRNA. Its function is as follows. Responsible for synthesis of pseudouridine from uracil-13 in transfer RNAs. The chain is tRNA pseudouridine synthase D from Salmonella choleraesuis (strain SC-B67).